Reading from the N-terminus, the 555-residue chain is DNA repair and recombination protein rhm52 (555 aa).

Residues 148–152 (KRALR) mediate DNA binding. Disordered stretches follow at residues 197 to 232 (VVAEPRLPPVKPEPSNTASAAPHPPLPPLPEADSFD) and 251 to 555 (HPDE…MKLN). The span at 260–276 (NSHASGSSGNTGASTTN) shows a compositional bias: low complexity. 2 stretches are compositionally biased toward polar residues: residues 283–300 (SGNQSNQQRPMQPSSRMN) and 312–334 (TPNHQINRSGPQNGSINNQQNNH). Low complexity-rich tracts occupy residues 354 to 375 (NNNNTSNGTGPHQRPLGNGPQQ) and 382 to 404 (NGAATAPSGAEPVAFFSARAVAR). Polar residues predominate over residues 468–478 (DNPSNNAGNGV). Low complexity predominate over residues 479–490 (QNQPQKPQPSQQ). The span at 491 to 500 (RGSILNPQFD) shows a compositional bias: polar residues. Residues 536–547 (PNGTSNGNGTPG) are compositionally biased toward low complexity.

It belongs to the RAD52 family. In terms of assembly, part of a complex that includes RAD51, RAD52 and RAD59.

Its subcellular location is the nucleus. Functionally, involved in DNA double-strand break (DSB) repair and recombination. Promotes the annealing of complementary single-stranded DNA and by stimulation of the RAD51 recombinase. In Pyricularia oryzae (strain 70-15 / ATCC MYA-4617 / FGSC 8958) (Rice blast fungus), this protein is DNA repair and recombination protein rhm52 (RHM52).